Reading from the N-terminus, the 585-residue chain is UvrABC system protein C (585 aa).

Positions 15–90 constitute a GIY-YIG domain; that stretch reads AEPGVYQFLE…IKRHQPRYNV (76 aa). Residues 198-233 form the UVR domain; sequence GILADPLRQEMQAAATAEEFERAANIRDRLAVIESF.

This sequence belongs to the UvrC family. In terms of assembly, interacts with UvrB in an incision complex.

It is found in the cytoplasm. Functionally, the UvrABC repair system catalyzes the recognition and processing of DNA lesions. UvrC both incises the 5' and 3' sides of the lesion. The N-terminal half is responsible for the 3' incision and the C-terminal half is responsible for the 5' incision. This is UvrABC system protein C from Haloquadratum walsbyi (strain DSM 16790 / HBSQ001).